Consider the following 329-residue polypeptide: Protein PRY2 (329 aa).

Residues 1 to 18 (MKFSKVSLLAASASVALS) form the signal peptide. The segment covering 122-131 (TSASATQDDV) has biased composition (polar residues). The disordered stretch occupies residues 122–197 (TSASATQDDV…SSSDFSTSMV (76 aa)). A compositionally biased stretch (low complexity) spans 132–190 (TTTLTSSTQPTSTTTPTTTTTSPTTTTSPTTTASPTTTASPTTATTTQSTASSTQSSSS). Residues 197-311 (VNEHNTKRAL…EWGDYIICSY (115 aa)) form the SCP domain.

The protein belongs to the CRISP family. Post-translationally, O-glycosylated.

The protein localises to the secreted. Functionally, secreted protein required for efficient export of lipids such as acetylated sterols. Acts in detoxification of hydrophobic compounds. The protein is Protein PRY2 (PRY2) of Saccharomyces cerevisiae (strain ATCC 204508 / S288c) (Baker's yeast).